The primary structure comprises 377 residues: Alanine racemase (377 aa).

Lys37 serves as the catalytic Proton acceptor; specific for D-alanine. Lys37 bears the N6-(pyridoxal phosphate)lysine mark. Substrate is bound at residue Arg135. The active-site Proton acceptor; specific for L-alanine is the Tyr271. Met319 is a substrate binding site.

Belongs to the alanine racemase family. Pyridoxal 5'-phosphate is required as a cofactor.

The catalysed reaction is L-alanine = D-alanine. It participates in amino-acid biosynthesis; D-alanine biosynthesis; D-alanine from L-alanine: step 1/1. Its function is as follows. Catalyzes the interconversion of L-alanine and D-alanine. May also act on other amino acids. This chain is Alanine racemase (alr), found in Helicobacter pylori (strain Shi470).